The following is a 299-amino-acid chain: ATP phosphoribosyltransferase (299 aa).

Belongs to the ATP phosphoribosyltransferase family. Long subfamily. As to quaternary structure, equilibrium between an active dimeric form, an inactive hexameric form and higher aggregates. Interconversion between the various forms is largely reversible and is influenced by the natural substrates and inhibitors of the enzyme. Mg(2+) is required as a cofactor.

The protein resides in the cytoplasm. The catalysed reaction is 1-(5-phospho-beta-D-ribosyl)-ATP + diphosphate = 5-phospho-alpha-D-ribose 1-diphosphate + ATP. The protein operates within amino-acid biosynthesis; L-histidine biosynthesis; L-histidine from 5-phospho-alpha-D-ribose 1-diphosphate: step 1/9. Its activity is regulated as follows. Feedback inhibited by histidine. Catalyzes the condensation of ATP and 5-phosphoribose 1-diphosphate to form N'-(5'-phosphoribosyl)-ATP (PR-ATP). Has a crucial role in the pathway because the rate of histidine biosynthesis seems to be controlled primarily by regulation of HisG enzymatic activity. The polypeptide is ATP phosphoribosyltransferase (Buchnera aphidicola subsp. Schlechtendalia chinensis).